The primary structure comprises 317 residues: Acetyl-coenzyme A carboxylase carboxyl transferase subunit alpha (317 aa).

The region spanning 32-293 is the CoA carboxyltransferase C-terminal domain; that stretch reads NLSEEIARLE…KRLLTSELQA (262 aa).

Belongs to the AccA family. Acetyl-CoA carboxylase is a heterohexamer composed of biotin carboxyl carrier protein (AccB), biotin carboxylase (AccC) and two subunits each of ACCase subunit alpha (AccA) and ACCase subunit beta (AccD).

Its subcellular location is the cytoplasm. It carries out the reaction N(6)-carboxybiotinyl-L-lysyl-[protein] + acetyl-CoA = N(6)-biotinyl-L-lysyl-[protein] + malonyl-CoA. It participates in lipid metabolism; malonyl-CoA biosynthesis; malonyl-CoA from acetyl-CoA: step 1/1. Functionally, component of the acetyl coenzyme A carboxylase (ACC) complex. First, biotin carboxylase catalyzes the carboxylation of biotin on its carrier protein (BCCP) and then the CO(2) group is transferred by the carboxyltransferase to acetyl-CoA to form malonyl-CoA. The sequence is that of Acetyl-coenzyme A carboxylase carboxyl transferase subunit alpha from Legionella pneumophila (strain Paris).